Consider the following 165-residue polypeptide: 16S rRNA aminocarboxypropyltransferase (165 aa).

4 residues coordinate S-adenosyl-L-methionine: Thr17, Leu62, Leu83, and Thr102.

Belongs to the TDD superfamily. TSR3 family.

Its subcellular location is the cytoplasm. The catalysed reaction is an N(1)-methylpseudouridine in rRNA + S-adenosyl-L-methionine = N(1)-methyl-N(3)-[(3S)-3-amino-3-carboxypropyl]pseudouridine in rRNA + S-methyl-5'-thioadenosine + H(+). Its function is as follows. Aminocarboxypropyltransferase that catalyzes the aminocarboxypropyl transfer on pseudouridine corresponding to position 914 in M.jannaschii 16S rRNA. It constitutes the last step in biosynthesis of the hypermodified N1-methyl-N3-(3-amino-3-carboxypropyl) pseudouridine (m1acp3-Psi). The chain is 16S rRNA aminocarboxypropyltransferase from Halobacterium salinarum (strain ATCC 700922 / JCM 11081 / NRC-1) (Halobacterium halobium).